Reading from the N-terminus, the 227-residue chain is Cytochrome c oxidase subunit 2 (227 aa).

The Mitochondrial intermembrane portion of the chain corresponds to 1–14 (MAYPFQLGLQDATS). Residues 15 to 45 (PIMEELLHFHDHTLMIVFLISSLVLYIISLM) traverse the membrane as a helical segment. Topologically, residues 46–59 (LTTKLTHTSTMDAQ) are mitochondrial matrix. The chain crosses the membrane as a helical span at residues 60–87 (EVETVWTILPAIILILIALPSLRILYMM). The Mitochondrial intermembrane portion of the chain corresponds to 88–227 (DEINNPSLTV…YFETWSALMV (140 aa)). Residues His-161, Cys-196, Glu-198, Cys-200, His-204, and Met-207 each contribute to the Cu cation site. Glu-198 provides a ligand contact to Mg(2+). Residue Tyr-218 is modified to Phosphotyrosine.

Belongs to the cytochrome c oxidase subunit 2 family. As to quaternary structure, component of the cytochrome c oxidase (complex IV, CIV), a multisubunit enzyme composed of 14 subunits. The complex is composed of a catalytic core of 3 subunits MT-CO1, MT-CO2 and MT-CO3, encoded in the mitochondrial DNA, and 11 supernumerary subunits COX4I, COX5A, COX5B, COX6A, COX6B, COX6C, COX7A, COX7B, COX7C, COX8 and NDUFA4, which are encoded in the nuclear genome. The complex exists as a monomer or a dimer and forms supercomplexes (SCs) in the inner mitochondrial membrane with NADH-ubiquinone oxidoreductase (complex I, CI) and ubiquinol-cytochrome c oxidoreductase (cytochrome b-c1 complex, complex III, CIII), resulting in different assemblies (supercomplex SCI(1)III(2)IV(1) and megacomplex MCI(2)III(2)IV(2)). Found in a complex with TMEM177, COA6, COX18, COX20, SCO1 and SCO2. Interacts with TMEM177 in a COX20-dependent manner. Interacts with COX20. Interacts with COX16. Cu cation is required as a cofactor.

The protein resides in the mitochondrion inner membrane. The catalysed reaction is 4 Fe(II)-[cytochrome c] + O2 + 8 H(+)(in) = 4 Fe(III)-[cytochrome c] + 2 H2O + 4 H(+)(out). In terms of biological role, component of the cytochrome c oxidase, the last enzyme in the mitochondrial electron transport chain which drives oxidative phosphorylation. The respiratory chain contains 3 multisubunit complexes succinate dehydrogenase (complex II, CII), ubiquinol-cytochrome c oxidoreductase (cytochrome b-c1 complex, complex III, CIII) and cytochrome c oxidase (complex IV, CIV), that cooperate to transfer electrons derived from NADH and succinate to molecular oxygen, creating an electrochemical gradient over the inner membrane that drives transmembrane transport and the ATP synthase. Cytochrome c oxidase is the component of the respiratory chain that catalyzes the reduction of oxygen to water. Electrons originating from reduced cytochrome c in the intermembrane space (IMS) are transferred via the dinuclear copper A center (CU(A)) of subunit 2 and heme A of subunit 1 to the active site in subunit 1, a binuclear center (BNC) formed by heme A3 and copper B (CU(B)). The BNC reduces molecular oxygen to 2 water molecules using 4 electrons from cytochrome c in the IMS and 4 protons from the mitochondrial matrix. This Canis lupus familiaris (Dog) protein is Cytochrome c oxidase subunit 2 (MT-CO2).